The chain runs to 452 residues: Probable cytosolic iron-sulfur protein assembly protein 1 (452 aa).

Pro residues predominate over residues 1 to 12; sequence MPPPTTPTPNPS. The disordered stretch occupies residues 1–24; sequence MPPPTTPTPNPSIPQKATLTPLPP. 6 WD repeats span residues 70-121, 161-200, 213-267, 273-319, 340-379, and 411-452; these read GHAR…DAAA, GHENEVKSLAFSPGGQYLATSSRDKSVWIWEDVSSGQGGD, EHDG…EWVC, GHGG…FGGV, VHTRDVYSVSWSADTGLVASTGSDGIIAVYAEESAPEDVA, and YEVN…VRIS.

It belongs to the WD repeat CIA1 family.

Essential component of the cytosolic iron-sulfur (Fe/S) protein assembly machinery. Required for the maturation of extramitochondrial Fe/S proteins. This is Probable cytosolic iron-sulfur protein assembly protein 1 from Chaetomium globosum (strain ATCC 6205 / CBS 148.51 / DSM 1962 / NBRC 6347 / NRRL 1970) (Soil fungus).